Reading from the N-terminus, the 243-residue chain is Voltage-gated monoatomic cation channel TMEM109 (243 aa).

An N-terminal signal peptide occupies residues M1–A33. Residues Q34 to Q83 are Lumenal-facing. Residues V84 to A104 traverse the membrane as a helical segment. The Cytoplasmic portion of the chain corresponds to Q105–G135. The helical transmembrane segment at A136–L156 threads the bilayer. Over G157–R185 the chain is Lumenal. A helical transmembrane segment spans residues A186–S205. The Cytoplasmic segment spans residues R206 to E243.

As to quaternary structure, homooligomer. Interacts with CRYAB; in the cellular response to DNA damage.

The protein localises to the nucleus outer membrane. It localises to the endoplasmic reticulum membrane. It is found in the sarcoplasmic reticulum membrane. It catalyses the reaction K(+)(in) = K(+)(out). The catalysed reaction is Ca(2+)(in) = Ca(2+)(out). In terms of biological role, functions as a voltage-gated monoatomic cation channel permeable to both potassium and calcium. Plays a role in the cellular response to DNA damage. This Mus musculus (Mouse) protein is Voltage-gated monoatomic cation channel TMEM109.